Consider the following 50-residue polypeptide: Light-harvesting protein B-870 beta chain (50 aa).

Topologically, residues 2 to 22 (ADNTDLSFTGLTDEQAQELHS) are cytoplasmic. Positions 21 and 39 each coordinate a bacteriochlorophyll. The chain crosses the membrane as a helical span at residues 23–45 (VYMSGLFLFAAVAVVAHLATYIW). The Periplasmic segment spans residues 46–50 (RPWFG).

The protein belongs to the antenna complex beta subunit family. The core complex is formed by different alpha and beta chains, binding bacteriochlorophyll molecules, and arranged most probably in tetrameric structures disposed around the reaction center. The non-pigmented gamma chains may constitute additional components.

It is found in the cell inner membrane. Functionally, antenna complexes are light-harvesting systems, which transfer the excitation energy to the reaction centers. The sequence is that of Light-harvesting protein B-870 beta chain (pufB) from Roseobacter denitrificans (strain ATCC 33942 / OCh 114) (Erythrobacter sp. (strain OCh 114)).